Here is a 270-residue protein sequence, read N- to C-terminus: FKBP-type peptidyl-prolyl cis-trans isomerase FkpA (270 aa).

Residues 1–25 (MKSLFKVTLLATTMAVALHAPITFA) form the signal peptide. Residues 164–249 (SDTVVVNYKG…VFDVELLDVK (86 aa)) enclose the PPIase FKBP-type domain.

It belongs to the FKBP-type PPIase family.

The protein resides in the periplasm. It catalyses the reaction [protein]-peptidylproline (omega=180) = [protein]-peptidylproline (omega=0). In terms of biological role, PPIases accelerate the folding of proteins. It catalyzes the cis-trans isomerization of proline imidic peptide bonds in oligopeptides. This is FKBP-type peptidyl-prolyl cis-trans isomerase FkpA (fkpA) from Escherichia coli O157:H7.